We begin with the raw amino-acid sequence, 255 residues long: MAQEKMDLDFEADTSEGATLRRSNSAPLIHVLSDLSQVFEPYPLRTGRTSTAIMSHHSLEEGLDMMNRETTNEREAQAGMQISQSWDESLSLSDSDFDKPEKLYSPKRIDFTPVSPAPSPTRGFGKQCLSPSLQMFVSSSGMPPSPVLNPRHFSRRSQSPVKCIRPSVLGPLKRKGEMEMESQPKRPFQGTTSMLSTNPAQLSDFSSCSDILDGSSISSGLSSDSLATGSAPAESPVACSNSCSPFILMDDLSPK.

The segment at 1–24 (MAQEKMDLDFEADTSEGATLRRSN) is disordered. Alanine 2 carries the N-acetylalanine modification. Phosphoserine is present on residues serine 25, serine 33, serine 50, and serine 58. At threonine 112 the chain carries Phosphothreonine. Phosphoserine occurs at positions 115 and 119. Arginine 122 is subject to Omega-N-methylarginine. Residue serine 145 is modified to Phosphoserine. 2 disordered regions span residues 169–196 (LGPL…SMLS) and 219–238 (SGLS…SPVA). Residues 174-184 (RKGEMEMESQP) are compositionally biased toward basic and acidic residues.

This sequence belongs to the FAM122 family.

This Mus musculus (Mouse) protein is PABIR family member 2.